Here is a 750-residue protein sequence, read N- to C-terminus: Photosystem I P700 chlorophyll a apoprotein A1 (750 aa).

A run of 8 helical transmembrane segments spans residues 70 to 93, 156 to 179, 195 to 219, 291 to 309, 346 to 369, 385 to 411, 433 to 455, and 531 to 549; these read VFSAHFGQLSIIFLWLSGMYFHGA, LYCTAIGALVFAALMLFAGWFHYH, LNHHLAGLLGLGSLSWAGHQVHVSL, IAHHHLAIAILFLIAGHMY, WHAQLSLNLAMLGSLTIVVAHHMY, LSLFTHHMWIGGFLIVGAAAHAAIFMV, AIISHLNWVCIFLGFHSFGLYIH, and FLVHHIHAFTIHVTVLILL. The [4Fe-4S] cluster site is built by Cys-573 and Cys-582. Helical transmembrane passes span 589–610 and 664–686; these read HVFLGLFWMYNAISVVIFHFSW and LSAYGLFFLGAHFVWAFSLMFLF. His-675 contacts chlorophyll a'. 2 residues coordinate chlorophyll a: Met-683 and Tyr-691. Trp-692 lines the phylloquinone pocket. A helical membrane pass occupies residues 724–744; the sequence is AVGVTHYLLGGIATTWAFFLA.

It belongs to the PsaA/PsaB family. As to quaternary structure, the PsaA/B heterodimer binds the P700 chlorophyll special pair and subsequent electron acceptors. PSI consists of a core antenna complex that captures photons, and an electron transfer chain that converts photonic excitation into a charge separation. The eukaryotic PSI reaction center is composed of at least 11 subunits. P700 is a chlorophyll a/chlorophyll a' dimer, A0 is one or more chlorophyll a, A1 is one or both phylloquinones and FX is a shared 4Fe-4S iron-sulfur center. serves as cofactor.

Its subcellular location is the plastid. The protein resides in the chloroplast thylakoid membrane. It carries out the reaction reduced [plastocyanin] + hnu + oxidized [2Fe-2S]-[ferredoxin] = oxidized [plastocyanin] + reduced [2Fe-2S]-[ferredoxin]. Functionally, psaA and PsaB bind P700, the primary electron donor of photosystem I (PSI), as well as the electron acceptors A0, A1 and FX. PSI is a plastocyanin-ferredoxin oxidoreductase, converting photonic excitation into a charge separation, which transfers an electron from the donor P700 chlorophyll pair to the spectroscopically characterized acceptors A0, A1, FX, FA and FB in turn. Oxidized P700 is reduced on the lumenal side of the thylakoid membrane by plastocyanin. This is Photosystem I P700 chlorophyll a apoprotein A1 from Eucalyptus globulus subsp. globulus (Tasmanian blue gum).